Here is a 292-residue protein sequence, read N- to C-terminus: MNPADLPDTLDVAPLTGETGEPCSFGILIKPCRAGRHIGELSVTWLRALVYSHQLVVLRGFDHFASSDSLTRYCATFGEIMMWPYGAVLELVEHANPDDHIFANSYVPLHWDGMYLDTVPEFQLFQCVHAAGDMQGGRTTFSSTNAALRIATPAVRELWARAHGRYQRSVELYSNTVEAPIIGIHPLREFPVIRFCEPPDENDATFLNPSSYSFGGINKDEEEMLLVSLMKTLRDPRVYYAHQWQTGDFVLSDNLSLLHGREQYTHHSGRHLRRVHIHGRPQIANHHLVRSE.

The Fe cation site is built by H110, D112, and H259.

Belongs to the TfdA dioxygenase family. Fe(2+) serves as cofactor.

The catalysed reaction is (2S)-3-(4-hydroxyphenyl)-2-isocyanopropanoate + 2-oxoglutarate + O2 = (2E)-3-(4-hydroxyphenyl)-2-isocyanoprop-2-enoate + succinate + CO2 + H2O. In terms of biological role, catalyzes the 2-oxoglutarate-dependent oxidation of tyrosine isonitrile. In Erwinia amylovora (strain CFBP1430), this protein is Tyrosine isonitrile desaturase.